Reading from the N-terminus, the 202-residue chain is MCTGGCARCLGGTLIPLAFFGFLANILLFFPGGKVIDDNDHLSQEIWFFGGILGSGVLMIFPALVFLGLKNNDCCGCCGNEGCGKRFAMFTSTIFAVVGFLGAGYSFIISAISINKGPKCLMANSTWGYPFHDGDYLNDEALWNKCREPLNVVPWNLTLFSILLVVGGIQMVLCAIQVVNGLLGTLCGDCQCCGCCGGDGPV.

Residues 1 to 9 (MCTGGCARC) lie on the Cytoplasmic side of the membrane. A helical membrane pass occupies residues 10-30 (LGGTLIPLAFFGFLANILLFF). Residues 31–45 (PGGKVIDDNDHLSQE) lie on the Extracellular side of the membrane. The chain crosses the membrane as a helical span at residues 46–66 (IWFFGGILGSGVLMIFPALVF). The Cytoplasmic segment spans residues 67-93 (LGLKNNDCCGCCGNEGCGKRFAMFTST). A helical transmembrane segment spans residues 94 to 114 (IFAVVGFLGAGYSFIISAISI). Topologically, residues 115-158 (NKGPKCLMANSTWGYPFHDGDYLNDEALWNKCREPLNVVPWNLT) are extracellular. N-linked (GlcNAc...) asparagine glycosylation is found at asparagine 124 and asparagine 156. Residues 159–179 (LFSILLVVGGIQMVLCAIQVV) form a helical membrane-spanning segment. Over 180-202 (NGLLGTLCGDCQCCGCCGGDGPV) the chain is Cytoplasmic.

This sequence belongs to the L6 tetraspanin family. Post-translationally, N-glycosylated. Glycosylation is required for the growth inhibitory effect. As to expression, jejunum and liver.

It is found in the membrane. Functionally, regulates the adhesive and proliferative status of intestinal epithelial cells. Can mediate density-dependent cell proliferation. In Homo sapiens (Human), this protein is Transmembrane 4 L6 family member 4 (TM4SF4).